A 480-amino-acid polypeptide reads, in one-letter code: UDP-N-acetylmuramate--L-alanine ligase (480 aa).

127-133 (GTHGKTT) is a binding site for ATP.

Belongs to the MurCDEF family.

The protein localises to the cytoplasm. The catalysed reaction is UDP-N-acetyl-alpha-D-muramate + L-alanine + ATP = UDP-N-acetyl-alpha-D-muramoyl-L-alanine + ADP + phosphate + H(+). The protein operates within cell wall biogenesis; peptidoglycan biosynthesis. In terms of biological role, cell wall formation. In Blochmanniella floridana, this protein is UDP-N-acetylmuramate--L-alanine ligase.